Reading from the N-terminus, the 101-residue chain is UPF0358 protein EF_2458 (101 aa).

The protein belongs to the UPF0358 family.

In Enterococcus faecalis (strain ATCC 700802 / V583), this protein is UPF0358 protein EF_2458.